The primary structure comprises 591 residues: Aspartate--tRNA ligase (591 aa).

Residue glutamate 173 coordinates L-aspartate. The segment at 197 to 200 is aspartate; the sequence is QLFK. Arginine 219 provides a ligand contact to L-aspartate. ATP is bound by residues 219–221 and glutamine 228; that span reads RDE. Histidine 446 lines the L-aspartate pocket. Glutamate 482 provides a ligand contact to ATP. An L-aspartate-binding site is contributed by arginine 489. Residue 534-537 participates in ATP binding; it reads GLDR.

Belongs to the class-II aminoacyl-tRNA synthetase family. Type 1 subfamily. Homodimer.

The protein resides in the cytoplasm. The enzyme catalyses tRNA(Asp) + L-aspartate + ATP = L-aspartyl-tRNA(Asp) + AMP + diphosphate. In terms of biological role, catalyzes the attachment of L-aspartate to tRNA(Asp) in a two-step reaction: L-aspartate is first activated by ATP to form Asp-AMP and then transferred to the acceptor end of tRNA(Asp). The polypeptide is Aspartate--tRNA ligase (Limosilactobacillus fermentum (strain NBRC 3956 / LMG 18251) (Lactobacillus fermentum)).